A 117-amino-acid chain; its full sequence is uncharacterized protein (117 aa).

A disordered region spans residues 96–117 (RKGGASKHRTLSAETGIRGEGE).

This is an uncharacterized protein from Saccharomyces cerevisiae (strain ATCC 204508 / S288c) (Baker's yeast).